The following is a 478-amino-acid chain: MIQVLLVTICLAAFPYQGSSIILESGNVNDYEVVYPRKVIALSEGAAQQKYEDTMQYEFKVNGEPVVLHLEKNKGLFAKDYSETHYSPDGTRITTYPSVEDHCYYQGRIHNDADSTASISACNGLKGHFKLQGETYFIEPMKLPDSEAHAVFKYENIEKEDESPKMCGVTETNWESDEPIKKVSQLNLNHEIKRHVDIVVVVDSRFCTKHSNDLEVIRKFVHEVVNAIIESYKYMHFGISLVNLETWCNGDLINVQEDSYETLKAFGKWRESDLIKHVNHSNAQFLMDMKFIKNIIGKAYLDSICDPERSVGIVQNYHGITLNVAAIMAHEMGHNLGVRHDGEYCTCYGSSECIMSSHISDPPSKYFSNCSYYQFWKYIENQNPQCILNKPLRTVSIPVSGNEHLEAGKECDCSSPENPCCDAATCKLRPGAQCGEGLCCEQCKFSRAGKICRIPRGDMPDDRCTGQSADCPRYHSHA.

Positions 1-20 are cleaved as a signal peptide; sequence MIQVLLVTICLAAFPYQGSS. Positions 21-188 are excised as a propeptide; it reads IILESGNVND…PIKKVSQLNL (168 aa). In terms of domain architecture, Peptidase M12B spans 194-391; the sequence is RHVDIVVVVD…QNPQCILNKP (198 aa). Residues C207 and C248 are joined by a disulfide bond. A glycan (N-linked (GlcNAc...) (complex) asparagine) is linked at N279. 3 disulfides stabilise this stretch: C305–C386, C345–C370, and C347–C353. H330 contacts Zn(2+). E331 is a catalytic residue. The Zn(2+) site is built by H334 and H340. A glycan (N-linked (GlcNAc...) (complex) asparagine) is linked at N369. A propeptide spanning residues 392–407 is cleaved from the precursor; the sequence is LRTVSIPVSGNEHLEA. Residues 397–478 form the Disintegrin domain; sequence IPVSGNEHLE…ADCPRYHSHA (82 aa). 6 disulfide bridges follow: C411–C426, C413–C421, C420–C443, C434–C440, C439–C464, and C452–C471. A Cell attachment site motif is present at residues 456–458; that stretch reads RGD. The propeptide occupies 476-478; sequence SHA.

The protein belongs to the venom metalloproteinase (M12B) family. P-II subfamily. P-IIa sub-subfamily. As to quaternary structure, monomeric (disintegrin). The cofactor is Zn(2+). Post-translationally, glycans are composed of 4 GlcNAc, 3 Man, 2 Gal, 2 NeuAC and 1 Fuc residue. Expressed by the venom gland.

It localises to the secreted. Functionally, impairs hemostasis in the envenomed animal. Its function is as follows. Inhibits platelet aggregation induced by ADP, thrombin, platelet-activating factor and collagen. Acts by inhibiting fibrinogen interaction with platelet receptors alpha-IIb/beta-3 (ITGA2B/ITGB3). The protein is Zinc metalloproteinase/disintegrin of Calloselasma rhodostoma (Malayan pit viper).